Reading from the N-terminus, the 522-residue chain is GMP synthase [glutamine-hydrolyzing] (522 aa).

The region spanning Arg8–Asp204 is the Glutamine amidotransferase type-1 domain. The Nucleophile role is filled by Cys86. Active-site residues include His179 and Glu181. Positions Trp205–Arg397 constitute a GMPS ATP-PPase domain. Ser232–Ser238 is a binding site for ATP.

In terms of assembly, homodimer.

The enzyme catalyses XMP + L-glutamine + ATP + H2O = GMP + L-glutamate + AMP + diphosphate + 2 H(+). Its pathway is purine metabolism; GMP biosynthesis; GMP from XMP (L-Gln route): step 1/1. Catalyzes the synthesis of GMP from XMP. This is GMP synthase [glutamine-hydrolyzing] from Roseobacter denitrificans (strain ATCC 33942 / OCh 114) (Erythrobacter sp. (strain OCh 114)).